A 372-amino-acid polypeptide reads, in one-letter code: NAD(P)H-quinone oxidoreductase subunit 1 (372 aa).

8 helical membrane-spanning segments follow: residues 27-47 (IIWLPLPMLLVLVSAVVGVLV), 97-117 (ILFTAGPILVLVPVILSWLIV), 128-148 (VGIGIFLWIALSSIQPIGLLM), 176-196 (LALSVLAIVLMTNSLSTIDIV), 204-224 (ILSWNIWRQPVGFIIFWICAL), 266-286 (ILSALLVSILYLGGWGFPIPV), 308-328 (SIGIIMTVLKAYLLVFVAILL), and 347-367 (FLLPISLANLLVTAGLKLAFP).

This sequence belongs to the complex I subunit 1 family. NDH-1 is composed of at least 11 different subunits.

It localises to the cellular thylakoid membrane. The catalysed reaction is a plastoquinone + NADH + (n+1) H(+)(in) = a plastoquinol + NAD(+) + n H(+)(out). It catalyses the reaction a plastoquinone + NADPH + (n+1) H(+)(in) = a plastoquinol + NADP(+) + n H(+)(out). In terms of biological role, NDH-1 shuttles electrons from an unknown electron donor, via FMN and iron-sulfur (Fe-S) centers, to quinones in the respiratory and/or the photosynthetic chain. The immediate electron acceptor for the enzyme in this species is believed to be plastoquinone. Couples the redox reaction to proton translocation, and thus conserves the redox energy in a proton gradient. This Prochlorococcus marinus subsp. pastoris (strain CCMP1986 / NIES-2087 / MED4) protein is NAD(P)H-quinone oxidoreductase subunit 1.